We begin with the raw amino-acid sequence, 85 residues long: Large ribosomal subunit protein bL27 (85 aa).

The segment at 1 to 21 (MAHKKAAGSTKNGRDSNAKRL) is disordered.

The protein belongs to the bacterial ribosomal protein bL27 family.

This Hydrogenovibrio crunogenus (strain DSM 25203 / XCL-2) (Thiomicrospira crunogena) protein is Large ribosomal subunit protein bL27.